The sequence spans 210 residues: Probable GTP-binding protein EngB (210 aa).

Residues 25–199 (TGIEVAFAGR…RQKLDTWFSE (175 aa)) enclose the EngB-type G domain. GTP-binding positions include 33–40 (GRSNAGKS), 60–64 (GRTQL), 78–81 (DLPG), 145–148 (TKAD), and 178–180 (FSS). The Mg(2+) site is built by Ser-40 and Thr-62.

Belongs to the TRAFAC class TrmE-Era-EngA-EngB-Septin-like GTPase superfamily. EngB GTPase family. Requires Mg(2+) as cofactor.

Its function is as follows. Necessary for normal cell division and for the maintenance of normal septation. This is Probable GTP-binding protein EngB from Shigella boydii serotype 4 (strain Sb227).